The primary structure comprises 216 residues: UDP-N-acetylglucosamine transferase subunit ALG14 (216 aa).

The Lumenal portion of the chain corresponds to M1 to C3. The helical transmembrane segment at V4–A24 threads the bilayer. Residues V25 to V216 are Cytoplasmic-facing.

This sequence belongs to the ALG14 family. Forms with ALG13 the active heterodimeric UDP-N-acetylglucosamine transferase complex.

It localises to the endoplasmic reticulum membrane. Part of the UDP-N-acetylglucosamine transferase complex that operates in the biosynthetic pathway of dolichol-linked oligosaccharides, the glycan precursors employed in protein asparagine (N)-glycosylation. The assembly of dolichol-linked oligosaccharides begins on the cytosolic side of the endoplasmic reticulum membrane and finishes in its lumen. The sequential addition of sugars to dolichol pyrophosphate produces dolichol-linked oligosaccharides containing fourteen sugars, including two GlcNAcs, nine mannoses and three glucoses. Once assembled, the oligosaccharides are transferred from the lipid to nascent proteins by oligosaccharyltransferases. Functions as a protein-membrane adapter recruiting ALG13 at the cytoplasmic face of the endoplasmic reticulum, where the complex catalyzes the second step of dolichol pyrophosphate biosynthesis, transferring a beta1,4-linked N-acetylglucosamine (GlcNAc) from UDP-GlcNAc to GlcNAc-pyrophosphatedolichol (Gn-PDol) to produce N,N'-diacetylchitobiosyl diphosphodolichol. N,N'-diacetylchitobiosyl diphosphodolichol is a substrate for ALG1, the following enzyme in the biosynthetic pathway. This chain is UDP-N-acetylglucosamine transferase subunit ALG14, found in Rattus norvegicus (Rat).